The primary structure comprises 346 residues: Homeobox protein ceh-22 (346 aa).

Disordered stretches follow at residues 1–68 (MFNV…QSAL) and 135–190 (LPDQ…RKKR). A compositionally biased stretch (low complexity) spans 9–24 (AATPSIASVSSVASPS). Positions 25 to 44 (EQHGLSTSVGVGVNDTTSRT) are enriched in polar residues. Positions 49–67 (AASSASSASAAPQQQSQSA) are enriched in low complexity. The segment covering 147–156 (LDNSNTSNGN) has biased composition (polar residues). A compositionally biased stretch (acidic residues) spans 166–182 (EDEDEILEDEENDEEDD). The segment at residues 189 to 248 (KRKRRVLFTKAQTYELERRFRSQKYLSAPEREALAMQIRLTPTQVKIWFQNHRYKTKKSH) is a DNA-binding region (homeobox).

This sequence belongs to the NK-2 homeobox family.

Its subcellular location is the nucleus. In terms of biological role, involved in combinatorial activation of gene expression in pharyngeal muscle. Specifically binds a site necessary for activity of the B subelement of myo-2 enhancer. Regulates distal tip cell fate. This is Homeobox protein ceh-22 (ceh-22) from Caenorhabditis elegans.